A 204-amino-acid chain; its full sequence is Somatotropin (204 aa).

Residues 1 to 17 (MDRVLLLLSVLTLGVSS) form the signal peptide. A Pyrrolidone carboxylic acid modification is found at Gln-18. Zn(2+) is bound at residue His-36. Cys-69 and Cys-177 are oxidised to a cystine. Glu-186 contributes to the Zn(2+) binding site. Cys-194 and Cys-202 are joined by a disulfide.

The protein belongs to the somatotropin/prolactin family.

It localises to the secreted. Its function is as follows. Growth hormone plays an important role in growth control and is involved in the regulation of several anabolic processes. Implicated as an osmoregulatory substance important for seawater adaptation. The chain is Somatotropin (gh) from Larimichthys crocea (Large yellow croaker).